Consider the following 65-residue polypeptide: DNA-directed RNA polymerase subunit Rpo10 (65 aa).

Residues C7, C10, C44, and C45 each contribute to the Zn(2+) site.

It belongs to the archaeal Rpo10/eukaryotic RPB10 RNA polymerase subunit family. Part of the RNA polymerase complex. The cofactor is Zn(2+).

The protein resides in the cytoplasm. It is found in the chromosome. The enzyme catalyses RNA(n) + a ribonucleoside 5'-triphosphate = RNA(n+1) + diphosphate. In terms of biological role, DNA-dependent RNA polymerase (RNAP) catalyzes the transcription of DNA into RNA using the four ribonucleoside triphosphates as substrates. This chain is DNA-directed RNA polymerase subunit Rpo10, found in Thermococcus kodakarensis (strain ATCC BAA-918 / JCM 12380 / KOD1) (Pyrococcus kodakaraensis (strain KOD1)).